A 400-amino-acid polypeptide reads, in one-letter code: Transposase for insertion sequence element ISRM3 (400 aa).

It belongs to the transposase mutator family.

Required for the transposition of the insertion element. This is Transposase for insertion sequence element ISRM3 from Rhizobium meliloti (strain 1021) (Ensifer meliloti).